The chain runs to 55 residues: uncharacterized protein (55 aa).

A helical transmembrane segment spans residues 27 to 47 (IFLIYHFSPIYCPYLFLFTVF).

Its subcellular location is the membrane. This is an uncharacterized protein from Acheta domesticus (House cricket).